The following is a 1475-amino-acid chain: MEEPRVHNLEKLMDEGVAGIEQLQILTAFKTHVKKELVRDDSIERYFDALVRFLGQPVEDRKVQQLGHSSLCYLIKRVAMQQPGRFQGARIRDLVRVVLLQEQLQERKVWGSAVKSLEAIYLCKPQAFEAELASICAATRGSDRTKCLLFMDELIQLQQMNNRNPMEVVNRFVDLWVDVLNESDPGCSKRDIELIHDILKKYFNEAMLQQFAERVVNTRSLKHFMHTEHAAPSSAQTTSSMPSGPFDVDEELTRVMEELPPNVVNSNIGEARDYLSFEHVVKDLEHITVAFQAIKETEHNWKQRQEGIITLRKIVNGNVSRQFPDEFIQACRDLNIADCISKAALSLRTTLSSHSCHLIKEMAFKLGPLLEPLLDVLFVPLRSLLSATKKISSQTAFATAAILLCTAPYHNRLFQQCIALSRDKNVSPRTFAAVFLRIYIIRFHRRLEHSSVLVEEWLHKGLTDPQTQVREAMRVTLWYWYVPNAQSAKKVLDSMPHQMKRIIEGSIPTYLNIEYHVTASVSSNESSRRSSFGVRRYPSYAAPTQSSNLQKLAANSLGGSANVRSLSENTNRHLTTYTSLAKKSLATRHESLSPRVASSGLISSAGAANLSSENLELTEELTSNHSNTLLKKYLNTNEPAVIRKSEGEPTGDLESMYSHLSSTTLQEKQQGLLFLKNLLLLKAPLDIAKLNPLLVQLSIQSPKSFKDLLTLASFHPLIPLANLIELFAINDLPTNVLLDEFSSTDLLETVIHSFQTFFPDHHDQLFLYYVKYRSVIFNYCFGIMIDLLSGDFAFSEGSTLFREVCTRIIEACGNDFNMEKYYTLISILYRADKSQFVELLRDAPVSSKFKIANELQRCDSTFNLHSIMSRESTAESHHSDPNQQYKDGAHGGDARDANGTSNSSSDSDNEPDLESTKHLLEMTMVNPIGLGCVENVLQSHIHAYKQDQQHQDPIAEKSLSTVAEVNDEDGDGSTTTQMKLMGANTTEPSNESDKDKTSDIVAESMRGTDDPNYAKLCAIDSALIDSEDEPELNNFGGLKGLTEMTKVVSIYEKLDGDEDVEMVDDEKFKDPVEQENQETGLDEIFRDEKHDQSVKFNDIPRIIDVNKSWDRYDGESIEDTSGNTSHGTDENRPASFGTVSELVRKEMEKSPTLPLNEEDSKLLSDGINEIELKHKDDPFVRDSEDCENGTPQDRSNFLSCKQHIDILGALPDNSLTAFELGLLEILDVSDMDANRILETVNTIQNSRLRSADVSRIVGAIVSHCTDPLLHWLTDSNGLQRLWSMLTALSTADGFSDSYKCVVLYTALLIANSQLSSSHLSTDELSDAWAFALRELSKLSSYNNETYIACCELRETLIEHYSSSYLPQLLESAIKELNVAEDRVRITFLLQTLSDALDHMNTLLSLEVLGSMSSLLQQFVTNDFTEWRYHSIKLLAQIYGILVARNSPASYIRSMFSILRQPEFDLVKSYYTMDHN.

Disordered regions lie at residues 870 to 913 and 1113 to 1134; these read REST…EPDL and DGESIEDTSGNTSHGTDENRPA. Over residues 887–896 the composition is skewed to basic and acidic residues; it reads DGAHGGDARD.

This sequence belongs to the CLASP family. As to quaternary structure, interacts with microtubules.

It is found in the cytoplasm. The protein resides in the cytoskeleton. It localises to the nucleus. Its subcellular location is the spindle. In terms of biological role, microtubule binding protein that promotes the stabilization of dynamic microtubules. Required for mitotic spindle formation. The chain is Protein STU1 (STU1) from Eremothecium gossypii (strain ATCC 10895 / CBS 109.51 / FGSC 9923 / NRRL Y-1056) (Yeast).